The chain runs to 766 residues: Deoxynucleotidyltransferase terminal-interacting protein 2 (766 aa).

The disordered stretch occupies residues 1-99 (MVVTRSARPQ…DCSSVPEVQD (99 aa)). 2 stretches are compositionally biased toward polar residues: residues 13-28 (NEATSVESLRQKNSAV) and 42-56 (SPDNPNTTESQTTPE). Thr-127 carries the post-translational modification Phosphothreonine. A phosphoserine mark is found at Ser-139, Ser-143, and Ser-146. The tract at residues 155–175 (TEITTRRSKAKSQREPKQESH) is disordered. Basic and acidic residues predominate over residues 166–175 (SQREPKQESH). Ser-180 and Ser-190 each carry phosphoserine. A Glycyl lysine isopeptide (Lys-Gly) (interchain with G-Cter in SUMO2) cross-link involves residue Lys-217. Thr-229 is subject to Phosphothreonine. Phosphoserine occurs at positions 236, 248, and 250. A Glycyl lysine isopeptide (Lys-Gly) (interchain with G-Cter in SUMO2) cross-link involves residue Lys-254. Ser-258 bears the Phosphoserine mark. Lys-327 participates in a covalent cross-link: Glycyl lysine isopeptide (Lys-Gly) (interchain with G-Cter in SUMO2). Ser-334 is modified (phosphoserine). 3 disordered regions span residues 345–367 (VSQRHSTPESDKTTSESSTLNHE), 390–450 (KNAI…KDDS), and 520–557 (KAGEVATEEEEEEEEEESEEELSDHDRNKDNEFSDEDN). A Glycyl lysine isopeptide (Lys-Gly) (interchain with G-Cter in SUMO2) cross-link involves residue Lys-394. Positions 421–434 (DMSKEKEVDSESDT) are enriched in basic and acidic residues. Polar residues predominate over residues 435–444 (KPSNLEFNTT). The stretch at 515-552 (LDEEDKAGEVATEEEEEEEEEESEEELSDHDRNKDNEF) forms a coiled coil. Acidic residues predominate over residues 520-542 (KAGEVATEEEEEEEEEESEEELS). The interval 558–615 (LLSNTKSKLLKLMSSSIDTGLNIKELGGLYINFNADKVQLNKRTLTQMKEKRKDELLQ) is tdBR region; mediates interaction with DNTT. Glycyl lysine isopeptide (Lys-Gly) (interchain with G-Cter in SUMO2) cross-links involve residues Lys-568, Lys-594, and Lys-616. A Phosphothreonine modification is found at Thr-620. Glycyl lysine isopeptide (Lys-Gly) (interchain with G-Cter in SUMO2) cross-links involve residues Lys-636, Lys-659, Lys-668, Lys-696, and Lys-741.

In terms of assembly, forms a ternary complex with DNTT and core histone; interaction with PCNA releases DNTT and H2A/H2B histones from this ternary complex. Interacts with ESR1, ESR2, PPARG and RXRA. Part of the small subunit (SSU) processome, composed of more than 70 proteins and the RNA chaperone small nucleolar RNA (snoRNA) U3.

The protein localises to the nucleus. It localises to the nucleolus. Its function is as follows. Regulates the transcriptional activity of DNTT and ESR1. May function as a chromatin remodeling protein. Part of the small subunit (SSU) processome, first precursor of the small eukaryotic ribosomal subunit. During the assembly of the SSU processome in the nucleolus, many ribosome biogenesis factors, an RNA chaperone and ribosomal proteins associate with the nascent pre-rRNA and work in concert to generate RNA folding, modifications, rearrangements and cleavage as well as targeted degradation of pre-ribosomal RNA by the RNA exosome. The chain is Deoxynucleotidyltransferase terminal-interacting protein 2 (DNTTIP2) from Bos taurus (Bovine).